A 38-amino-acid chain; its full sequence is Potassium channel toxin alpha-KTx 2.15 (38 aa).

Intrachain disulfides connect C7/C29, C13/C34, and C17/C36.

The protein belongs to the short scorpion toxin superfamily. Potassium channel inhibitor family. Alpha-KTx 02 subfamily. In terms of tissue distribution, expressed by the venom gland.

It is found in the secreted. Its function is as follows. Blocks human voltage-gated potassium channels Kv1.2/KCNA2 (IC(50)=0.3 nM), Kv1.3/KCNA3 (IC(50)=8.3 nM) and Shaker IR (with inactivation domain removed) (IC(50)=12 nM) and blocks intermediate conductance calcium-activated potassium channel KCa3.1/KCNN4 (IC(50)=6.4 nM). The chain is Potassium channel toxin alpha-KTx 2.15 from Centruroides tecomanus (Scorpion).